The chain runs to 356 residues: Cyclin-dependent kinase 5 activator 1 (356 aa).

2 disordered regions span residues 1-53 (MGAN…AKES) and 66-99 (IQPVMSRRSLPKSGSSSEATSSKSSDSLVSFTRN). Composition is skewed to low complexity over residues 40–49 (SNTSSRSSSN) and 71–92 (SRRSLPKSGSSSEATSSKSSDS).

It belongs to the cyclin-dependent kinase 5 activator family. In terms of assembly, heterodimer composed of a catalytic subunit cdk-5 and a regulatory subunit cdka-1. Interaction with cdka-1 is required for cdk-5 activation. Expressed in all classes of neurons in the ventral cord.

It is found in the cytoplasm. It localises to the cell projection. Its subcellular location is the dendrite. The protein localises to the axon. Activator of the kinase cdk-5. In several motor neurons, promotes the polarized trafficking of synaptic vesicles and dense-core vesicles. In the ventral nerve cord, regulates the synaptic localization of the glutamate receptor, glr-1. In DA motor neurons, regulates axonal transport of synaptic vesicle precursors by inhibiting dynein-mediated retrograde transport. Regulates the polarized distribution of dense-core vesicles in DB motor neurons. May regulate these processes in association with cdk-5. May also play a role in GABAergic synaptic vesicle localization in the ventral nerve cord. The polypeptide is Cyclin-dependent kinase 5 activator 1 (Caenorhabditis elegans).